The primary structure comprises 3255 residues: Genome polyprotein (3255 aa).

A Peptidase S30 domain is found at 292-437; that stretch reads VMNQQTLTAL…HTLTHRMVQY (146 aa). Residues histidine 345, aspartate 354, and serine 388 each act as for P1 proteinase activity in the active site. An Involved in interaction with stylet and aphid transmission motif is present at residues 489 to 492; it reads KITC. The Involved in virions binding and aphid transmission signature appears at 747–749; it reads PTK. Residues 773 to 895 enclose the Peptidase C6 domain; that stretch reads MFVAKDGYCY…ESEMQHYRVG (123 aa). Residues cysteine 781 and histidine 854 each act as for helper component proteinase activity in the active site. The 153-residue stretch at 1397–1549 folds into the Helicase ATP-binding domain; sequence EIAHNEYRDI…PMHMVDITTE (153 aa). Position 1410 to 1417 (1410 to 1417) interacts with ATP; sequence GGVGSGKS. The short motif at 1499–1502 is the DECH box element; sequence DECH. The Helicase C-terminal domain maps to 1568 to 1727; the sequence is DATKKGDNIL…GLPVMTSNVS (160 aa). The Nuclear localization signal signature appears at 2062–2069; that stretch reads EKGKKSGK. An O-(5'-phospho-RNA)-tyrosine modification is found at tyrosine 2084. The Peptidase C4 domain occupies 2215 to 2433; the sequence is SKTLFRGLRD…MVWGGINLIN (219 aa). Active-site for nuclear inclusion protein A activity residues include histidine 2260, aspartate 2295, and cysteine 2365. Residues 2699-2823 form the RdRp catalytic domain; that stretch reads WVYCDADGSQ…AIKPEYESLL (125 aa). The interval 2980–3027 is disordered; it reads TKLDAGQGSKNDDKQKSSADSKDNVITEKGSGSGQVRKDDDINAGLHG. Basic and acidic residues predominate over residues 2989–3005; that stretch reads KNDDKQKSSADSKDNVI.

The protein belongs to the potyviridae genome polyprotein family. As to quaternary structure, interacts with host eIF4E protein (via cap-binding region); this interaction mediates the translation of the VPg-viral RNA conjugates. Part of a complex that comprises VPg, RNA, host EIF4E and EIF4G; this interaction mediates the translation of the VPg-viral RNA conjugates. Post-translationally, VPg is uridylylated by the polymerase and is covalently attached to the 5'-end of the genomic RNA. This uridylylated form acts as a nucleotide-peptide primer for the polymerase. In terms of processing, potyviral RNA is expressed as two polyproteins which undergo post-translational proteolytic processing. Genome polyprotein is processed by NIa-pro, P1 and HC-pro proteinases resulting in the production of at least ten individual proteins. P3N-PIPO polyprotein is cleaved by P1 and HC-pro proteinases resulting in the production of three individual proteins. The P1 proteinase and the HC-pro cleave only their respective C-termini autocatalytically. 6K1 is essential for proper proteolytic separation of P3 from CI.

The protein localises to the host cytoplasmic vesicle. The protein resides in the host nucleus. It is found in the virion. The catalysed reaction is RNA(n) + a ribonucleoside 5'-triphosphate = RNA(n+1) + diphosphate. It catalyses the reaction Hydrolyzes glutaminyl bonds, and activity is further restricted by preferences for the amino acids in P6 - P1' that vary with the species of potyvirus, e.g. Glu-Xaa-Xaa-Tyr-Xaa-Gln-|-(Ser or Gly) for the enzyme from tobacco etch virus. The natural substrate is the viral polyprotein, but other proteins and oligopeptides containing the appropriate consensus sequence are also cleaved.. The enzyme catalyses Hydrolyzes a Gly-|-Gly bond at its own C-terminus, commonly in the sequence -Tyr-Xaa-Val-Gly-|-Gly, in the processing of the potyviral polyprotein.. Functionally, required for aphid transmission and also has proteolytic activity. Only cleaves a Gly-Gly dipeptide at its own C-terminus. Interacts with virions and aphid stylets. Acts as a suppressor of RNA-mediated gene silencing, also known as post-transcriptional gene silencing (PTGS), a mechanism of plant viral defense that limits the accumulation of viral RNAs. May have RNA-binding activity. Its function is as follows. Has helicase activity. It may be involved in replication. Indispensable for virus replication. In terms of biological role, mediates the cap-independent, EIF4E-dependent translation of viral genomic RNAs. Binds to the cap-binding site of host EIF4E and thus interferes with the host EIF4E-dependent mRNA export and translation. VPg-RNA directly binds EIF4E and is a template for transcription. Also forms trimeric complexes with EIF4E-EIF4G, which are templates for translation. Functionally, has RNA-binding and proteolytic activities. Its function is as follows. An RNA-dependent RNA polymerase that plays an essential role in the virus replication. Involved in aphid transmission, cell-to-cell and systemis movement, encapsidation of the viral RNA and in the regulation of viral RNA amplification. This is Genome polyprotein from Lettuce mosaic virus (strain E) (LMV).